A 358-amino-acid polypeptide reads, in one-letter code: Naringenin,2-oxoglutarate 3-dioxygenase (358 aa).

Residues 190 to 294 (CVDMDQKIVV…RLSIATFQNP (105 aa)) form the Fe2OG dioxygenase domain. Positions 217, 219, and 275 each coordinate Fe cation. 2-oxoglutarate is bound at residue Arg285.

The protein belongs to the iron/ascorbate-dependent oxidoreductase family. In terms of assembly, interacts with Dihydroflavonol-4-reductase (TT3), chalcone synthase (TT4) and chalcone isomerase (TT5) to form a flavonoid enzyme complex. Fe(2+) serves as cofactor. The cofactor is L-ascorbate.

The enzyme catalyses a (2S)-flavan-4-one + 2-oxoglutarate + O2 = a (2R,3R)-dihydroflavonol + succinate + CO2. It functions in the pathway secondary metabolite biosynthesis; flavonoid biosynthesis. Its function is as follows. Catalyzes the 3-beta-hydroxylation of 2S-flavanones to 2R,3R-dihydroflavonols which are intermediates in the biosynthesis of flavonols, anthocyanidins, catechins and proanthocyanidins in plants. This Arabidopsis thaliana (Mouse-ear cress) protein is Naringenin,2-oxoglutarate 3-dioxygenase (F3H).